Reading from the N-terminus, the 406-residue chain is LIM/homeobox protein Lhx2 (406 aa).

LIM zinc-binding domains are found at residues 53–105 (CAGC…CKED) and 115–168 (CARC…CRLH). The interval 250 to 270 (DAEHLDRDQPYPSSQKTKRMR) is disordered. The segment at residues 266–325 (TKRMRTSFKHHQLRTMKSYFAINHNPDAKDLKQLAQKTGLTKRVLQVWFQNARAKFRRNL) is a DNA-binding region (homeobox). The short motif at 307-323 (KRVLQVWFQNARAKFRR) is the Nuclear localization signal element. Over residues 328-356 (QENTGVDKTSDATLQTGTPSGPASELSNA) the composition is skewed to polar residues. 2 disordered regions span residues 328 to 375 (QENT…SPTL) and 387 to 406 (GNLE…TNLF). The span at 357–375 (SLSPSSTPTTLTDLTSPTL) shows a compositional bias: low complexity. Residues 396–406 (SPSQTTLTNLF) are compositionally biased toward polar residues.

As to quaternary structure, interacts (via LIM domains) with CITED2. Interacts with POU4F2 isoform 1.

The protein resides in the nucleus. Its function is as follows. Acts as a transcriptional activator. Stimulates the promoter of the alpha-glycoprotein gene. Transcriptional regulatory protein involved in the control of cell differentiation in developing lymphoid and neural cell types. This chain is LIM/homeobox protein Lhx2 (Lhx2), found in Mus musculus (Mouse).